A 158-amino-acid chain; its full sequence is N5-carboxyaminoimidazole ribonucleotide mutase (158 aa).

Positions 10, 13, and 40 each coordinate substrate.

It belongs to the AIR carboxylase family. Class I subfamily.

It catalyses the reaction 5-carboxyamino-1-(5-phospho-D-ribosyl)imidazole + H(+) = 5-amino-1-(5-phospho-D-ribosyl)imidazole-4-carboxylate. It participates in purine metabolism; IMP biosynthesis via de novo pathway; 5-amino-1-(5-phospho-D-ribosyl)imidazole-4-carboxylate from 5-amino-1-(5-phospho-D-ribosyl)imidazole (N5-CAIR route): step 2/2. Its function is as follows. Catalyzes the conversion of N5-carboxyaminoimidazole ribonucleotide (N5-CAIR) to 4-carboxy-5-aminoimidazole ribonucleotide (CAIR). The polypeptide is N5-carboxyaminoimidazole ribonucleotide mutase (Saccharolobus solfataricus (strain ATCC 35092 / DSM 1617 / JCM 11322 / P2) (Sulfolobus solfataricus)).